Consider the following 1071-residue polypeptide: Exportin-1 (1071 aa).

Residues 46–112 form the Importin N-terminal domain; sequence AQEVLTHLKE…KKYVVGLIIK (67 aa). HEAT repeat units follow at residues 217–240, 241–277, 354–472, 515–553, 560–597, and 602–639; these read QNAP…PLGY, IFET…VSVS, MLLV…YVDT, RFLV…QYPR, KFLK…KCRR, and VQVG…AVGY. Positions 327–450 are necessary for interaction with Ran and nuclear export complex formation; it reads CTFLKEHGQL…VREFMKDTDS (124 aa). Ser391 is modified (phosphoserine). The interval 411 to 481 is necessary for interaction with RANBP3; it reads TVLSKVRLLM…TEIIMTKKLQ (71 aa). Lys446 bears the N6-acetyllysine mark. Residue Thr448 is modified to Phosphothreonine. Ser450 is subject to Phosphoserine. Tyr454 bears the Phosphotyrosine mark. N6-acetyllysine is present on Lys693. HEAT repeat units follow at residues 775–813, 885–916, 917–954, and 1002–1039; these read NFVP…KLGG, TMRN…SFYQ, TYFC…NLVE, and FSLN…EERE. Ser1031 carries the phosphoserine modification.

It belongs to the exportin family. As to quaternary structure, found in a U snRNA export complex with PHAX/RNUXA, NCBP1/CBP80, NCBP2/CBP20, RAN, XPO1 and m7G-capped RNA. Component of a nuclear export receptor complex composed of KPNB1, RAN, SNUPN and XPO1. Found in a trimeric export complex with SNUPN, RAN and XPO1. Found in a nuclear export complex with RANBP3 and RAN. Found in a 60S ribosomal subunit export complex with NMD3, RAN, XPO1. Interacts with DDX3X, NMD3, NUP42, NUP88, NUP214, RANBP3 and TERT. Interacts with NEMF (via its N-terminus). Interacts with the monomeric form of BIRC5/survivin deacetylated at 'Lys-129'. Interacts with SERTAD2; the interaction translocates SERTAD2 out of the nucleus. Interacts with ATF2. Interacts with SLC35G1 and STIM1. Interacts with DCAF8. Interacts with DTNBP1 and the interaction translocates DTNBP1 out of the nucleus. Interacts with CPEB3. Interacts with HAX1. Interacts with BOK; translocates to the cytoplasm. Interacts with HSP90AB1. Interacts with LRPPRC; interacts with LRPPRC alone and also when LRPPRC is in complex with EIF4E and with EIF4E sensitivity element (4ESE)-containing mRNAs to form an EIF4E-dependent mRNA export complex.

Its subcellular location is the cytoplasm. It is found in the nucleus. The protein localises to the nucleoplasm. The protein resides in the cajal body. It localises to the nucleolus. Its function is as follows. Mediates the nuclear export of cellular proteins (cargos) bearing a leucine-rich nuclear export signal (NES) and of RNAs. In the nucleus, in association with RANBP3, binds cooperatively to the NES on its target protein and to the GTPase Ran in its active GTP-bound form. Docking of this complex to the nuclear pore complex (NPC) is mediated through binding to nucleoporins. Upon transit of a nuclear export complex into the cytoplasm, disassembling of the complex and hydrolysis of Ran-GTP to Ran-GDP (induced by RANBP1 and RANGAP1, respectively) cause release of the cargo from the export receptor. The directionality of nuclear export is thought to be conferred by an asymmetric distribution of the GTP- and GDP-bound forms of Ran between the cytoplasm and nucleus. Involved in U3 snoRNA transport from Cajal bodies to nucleoli. Binds to late precursor U3 snoRNA bearing a TMG cap. The sequence is that of Exportin-1 (Xpo1) from Mus musculus (Mouse).